A 542-amino-acid polypeptide reads, in one-letter code: Chaperonin GroEL (542 aa).

Residues 30-33 (TLGP), lysine 51, 87-91 (DGTTT), glycine 415, 480-482 (NAA), and aspartate 496 contribute to the ATP site.

Belongs to the chaperonin (HSP60) family. Forms a cylinder of 14 subunits composed of two heptameric rings stacked back-to-back. Interacts with the co-chaperonin GroES.

The protein resides in the cytoplasm. It catalyses the reaction ATP + H2O + a folded polypeptide = ADP + phosphate + an unfolded polypeptide.. Together with its co-chaperonin GroES, plays an essential role in assisting protein folding. The GroEL-GroES system forms a nano-cage that allows encapsulation of the non-native substrate proteins and provides a physical environment optimized to promote and accelerate protein folding. The polypeptide is Chaperonin GroEL (Tremblaya princeps).